A 457-amino-acid chain; its full sequence is UDP-glycosyltransferase 708C1 (457 aa).

Gly-31 serves as a coordination point for UDP-alpha-D-glucose. His-32 acts as the Proton acceptor in catalysis. His-32 provides a ligand contact to an anthocyanidin. Thr-34 contributes to the UDP-alpha-D-glucose binding site. Asn-94 provides a ligand contact to an anthocyanidin. Asp-129 (charge relay) is an active-site residue. Position 150 (Thr-150) interacts with UDP-alpha-D-glucose. Positions 279–280 (NR) are UDP. UDP-alpha-D-glucose contacts are provided by Val-341, Gln-343, His-358, Trp-361, Asn-362, Ser-363, and Glu-366. Gly-381 is a binding site for an anthocyanidin. Residues Asp-382 and Gln-383 each contribute to the UDP-alpha-D-glucose site.

The protein belongs to the UDP-glycosyltransferase family. Expressed in cotyledons. Not detected in flowers, leaves, roots and hypocotyls.

It catalyses the reaction a 3'-hydro-2'-hydroxy-beta-oxodihydrochalcone + UDP-alpha-D-glucose = a 3'-(beta-D-glucopyranosyl)-2'-hydroxy-beta-oxodihydrochalcone + UDP + H(+). Its function is as follows. UDP-glucose-dependent glucosyltransferase catalyzing the C-glucosylation of 2-hydroxyflavanones (2-hydroxynaringenin, 2-hydroxyeriodictyol and 2-hydroxypinocembrin) and phloretin. No activity with flavanones, flavones or flavonols. Exhibits C-glycosylation activity toward 2',4',6'-trihydroxyacetophenone and phloretin using UDP-glucose as sugar donor. Can use UDP-galactose as sugar donor, but catalytic efficiency is 14-fold lower toward UDP-galactose than toward UDP-glucose. The chain is UDP-glycosyltransferase 708C1 from Fagopyrum esculentum (Common buckwheat).